Here is a 453-residue protein sequence, read N- to C-terminus: Aminodeoxychorismate synthase component 1 (453 aa).

L-tryptophan is bound by residues Ser-36, 43–46, and 240–242; these read YSRF and PFS. The active-site Proton donor is Glu-258. Lys-274 functions as the N6-(4-deoxychorismate)-lysine intermediate in the catalytic mechanism.

This sequence belongs to the anthranilate synthase component I family. In terms of assembly, monomer. Heterodimer consisting of two non-identical subunits: a glutamine amidotransferase subunit (PabA) and a aminodeoxychorismate synthase subunit (PabB). It depends on Mg(2+) as a cofactor.

The catalysed reaction is chorismate + L-glutamine = 4-amino-4-deoxychorismate + L-glutamate. It functions in the pathway cofactor biosynthesis; tetrahydrofolate biosynthesis; 4-aminobenzoate from chorismate: step 1/2. Its activity is regulated as follows. Inhibited by 6-diazo-5-oxo-L-norleucine (DON). The inhibition is competitive with glutamine but uncompetitive with chorismate. Also inhibited by 2-fluorochorismate. Its function is as follows. Part of a heterodimeric complex that catalyzes the two-step biosynthesis of 4-amino-4-deoxychorismate (ADC), a precursor of p-aminobenzoate (PABA) and tetrahydrofolate. In the first step, a glutamine amidotransferase (PabA) generates ammonia as a substrate that, along with chorismate, is used in the second step, catalyzed by aminodeoxychorismate synthase (PabB) to produce ADC. PabB, in the absence of PabA, can catalyze the formation of ADC in the presence of exogenous ammonia. In Escherichia coli (strain K12), this protein is Aminodeoxychorismate synthase component 1 (pabB).